A 333-amino-acid polypeptide reads, in one-letter code: Replication factor C subunit 2 (333 aa).

Ala-2 bears the N-acetylalanine mark. Residue 55-62 (GPPGTGKT) coordinates ATP.

This sequence belongs to the activator 1 small subunits family. Heterotetramer of subunits RFC2, RFC3, RFC4 and RFC5 that can form a complex with RFC1.

It localises to the nucleus. In terms of biological role, may be involved in DNA replication and thus regulate cell proliferation. The polypeptide is Replication factor C subunit 2 (RFC2) (Arabidopsis thaliana (Mouse-ear cress)).